A 188-amino-acid chain; its full sequence is Elongation factor P (188 aa).

N6-(3,6-diaminohexanoyl)-5-hydroxylysine is present on K34.

Belongs to the elongation factor P family. Post-translationally, may be beta-lysylated on the epsilon-amino group of Lys-34 by the combined action of EpmA and EpmB, and then hydroxylated on the C5 position of the same residue by EpmC (if this protein is present). Lysylation is critical for the stimulatory effect of EF-P on peptide-bond formation. The lysylation moiety may extend toward the peptidyltransferase center and stabilize the terminal 3-CCA end of the tRNA. Hydroxylation of the C5 position on Lys-34 may allow additional potential stabilizing hydrogen-bond interactions with the P-tRNA.

It localises to the cytoplasm. It participates in protein biosynthesis; polypeptide chain elongation. Functionally, involved in peptide bond synthesis. Alleviates ribosome stalling that occurs when 3 or more consecutive Pro residues or the sequence PPG is present in a protein, possibly by augmenting the peptidyl transferase activity of the ribosome. Modification of Lys-34 is required for alleviation. The protein is Elongation factor P of Coxiella burnetii (strain CbuG_Q212) (Coxiella burnetii (strain Q212)).